The primary structure comprises 115 residues: Probable non-functional T cell receptor beta variable 7-1 (115 aa).

The signal sequence occupies residues Met-1–Ala-21. Residues Gly-22–Ser-115 form the Ig-like domain.

In terms of assembly, most probably, the alpha-beta TR is not assembled due to incorrect folding of the beta chain. Alpha-beta TR is a heterodimer composed of an alpha and beta chain; disulfide-linked. The alpha-beta TR is associated with the transmembrane signaling CD3 coreceptor proteins to form the TR-CD3 (TcR or TCR). The assembly of alpha-beta TR heterodimers with CD3 occurs in the endoplasmic reticulum where a single alpha-beta TR heterodimer associates with one CD3D-CD3E heterodimer, one CD3G-CD3E heterodimer and one CD247 homodimer forming a stable octameric structure. CD3D-CD3E and CD3G-CD3E heterodimers preferentially associate with TR alpha and TR beta chains, respectively. The association of the CD247 homodimer is the last step of TcR assembly in the endoplasmic reticulum and is required for transport to the cell surface.

The protein localises to the cell membrane. Its function is as follows. Probable non-functional open reading frame (ORF) of V region of the variable domain of T cell receptor (TR) beta chain. Non-functional ORF generally cannot participate in the synthesis of a productive T cell receptor (TR) chain due to altered V-(D)-J or switch recombination and/or splicing site (at mRNA level) and/or conserved amino acid change (protein level). Alpha-beta T cell receptors are antigen specific receptors which are essential to the immune response and are present on the cell surface of T lymphocytes. Recognize peptide-major histocompatibility (MH) (pMH) complexes that are displayed by antigen presenting cells (APC), a prerequisite for efficient T cell adaptive immunity against pathogens. Binding of alpha-beta TR to pMH complex initiates TR-CD3 clustering on the cell surface and intracellular activation of LCK that phosphorylates the ITAM motifs of CD3G, CD3D, CD3E and CD247 enabling the recruitment of ZAP70. In turn ZAP70 phosphorylates LAT, which recruits numerous signaling molecules to form the LAT signalosome. The LAT signalosome propagates signal branching to three major signaling pathways, the calcium, the mitogen-activated protein kinase (MAPK) kinase and the nuclear factor NF-kappa-B (NF-kB) pathways, leading to the mobilization of transcription factors that are critical for gene expression and essential for T cell growth and differentiation. The T cell repertoire is generated in the thymus, by V-(D)-J rearrangement. This repertoire is then shaped by intrathymic selection events to generate a peripheral T cell pool of self-MH restricted, non-autoaggressive T cells. Post-thymic interaction of alpha-beta TR with the pMH complexes shapes TR structural and functional avidity. This is Probable non-functional T cell receptor beta variable 7-1 from Homo sapiens (Human).